We begin with the raw amino-acid sequence, 549 residues long: Urocanate hydratase (549 aa).

NAD(+) contacts are provided by residues 46 to 47 (GG), Gln124, 170 to 172 (GMG), Glu190, Arg195, 236 to 237 (NA), 257 to 261 (QTSAH), 267 to 268 (YV), and Tyr316. The active site involves Cys404. Gly486 provides a ligand contact to NAD(+).

This sequence belongs to the urocanase family. It depends on NAD(+) as a cofactor.

Its subcellular location is the cytoplasm. It carries out the reaction 4-imidazolone-5-propanoate = trans-urocanate + H2O. The protein operates within amino-acid degradation; L-histidine degradation into L-glutamate; N-formimidoyl-L-glutamate from L-histidine: step 2/3. Its function is as follows. Catalyzes the conversion of urocanate to 4-imidazolone-5-propionate. This Caldanaerobacter subterraneus subsp. tengcongensis (strain DSM 15242 / JCM 11007 / NBRC 100824 / MB4) (Thermoanaerobacter tengcongensis) protein is Urocanate hydratase.